We begin with the raw amino-acid sequence, 170 residues long: Zinc finger protein 576 (170 aa).

Positions 1–29 are disordered; the sequence is MEDPNPEENMKQQDSPKERSPQSPGGNIC. Residues 8 to 20 are compositionally biased toward basic and acidic residues; it reads ENMKQQDSPKERS. 4 C2H2-type zinc fingers span residues 34 to 57, 71 to 93, 112 to 134, and 143 to 165; these read PKCT…KREH, FICF…QRSH, FPCP…RQMH, and FACT…YIRH.

This sequence belongs to the krueppel C2H2-type zinc-finger protein family.

The protein localises to the nucleus. Functionally, may be involved in transcriptional regulation. This Homo sapiens (Human) protein is Zinc finger protein 576 (ZNF576).